A 440-amino-acid chain; its full sequence is 5-hydroxytryptamine receptor 6 (440 aa).

The Extracellular portion of the chain corresponds to 1–27 (MVPEPGPTANSTPAWGAGPPSAPGGSG). Residues 28-52 (WVAAALCVVIALTAAANSLLIALIC) form a helical membrane-spanning segment. Over 53-62 (TQPALRNTSN) the chain is Cytoplasmic. A helical membrane pass occupies residues 63–88 (FFLVSLFTSDLMVGLVVMPPAMLNAL). Residues 89–96 (YGRWVLAR) are Extracellular-facing. The helical transmembrane segment at 97-122 (GLCLLWTAFDVMCCSASILNLCLISL) threads the bilayer. Cys99 and Cys180 are joined by a disulfide. Asp106 provides a ligand contact to serotonin. Residues 123–142 (DRYLLILSPLRYKLRMTPLR) lie on the Cytoplasmic side of the membrane. The helical transmembrane segment at 143–167 (ALALVLGAWSLAALASFLPLLLGWH) threads the bilayer. Residues 168-185 (ELGHARPPVPGQCRLLAS) lie on the Extracellular side of the membrane. Residues 186–209 (LPFVLVASGLTFFLPSGAICFTYC) traverse the membrane as a helical segment. Residues 210–266 (RILLAARKQAVQVASLTTGMASQASETLQVPRTPRPGVESADSRRLATKHSRKALKA) lie on the Cytoplasmic side of the membrane. The helical transmembrane segment at 267-293 (SLTLGILLGMFFVTWLPFFVANIVQAV) threads the bilayer. Asn288 provides a ligand contact to serotonin. At 294–299 (CDCISP) the chain is on the extracellular side. Residues 300–323 (GLFDVLTWLGYCNSTMNPIIYPLF) traverse the membrane as a helical segment. Over 324–440 (MRDFKRALGR…RPHPLGIPTN (117 aa)) the chain is Cytoplasmic. A disordered region spans residues 346–392 (ASLASPSLRTSHSGPRPGLSLQQVLPLPLPPDSDSDSDAGSGGSSGL). The span at 347–358 (SLASPSLRTSHS) shows a compositional bias: polar residues. The span at 362–371 (PGLSLQQVLP) shows a compositional bias: low complexity.

The protein belongs to the G-protein coupled receptor 1 family. As to quaternary structure, interacts with MTOR, RPTOR and NF1. Interacts with CDK5. In terms of tissue distribution, expressed in several human brain regions, most prominently in the caudate nucleus.

Its subcellular location is the cell membrane. Its function is as follows. G-protein coupled receptor for 5-hydroxytryptamine (serotonin), a biogenic hormone that functions as a neurotransmitter, a hormone and a mitogen. Also has a high affinity for tricyclic psychotropic drugs. Ligand binding causes a conformation change that triggers signaling via guanine nucleotide-binding proteins (G proteins) and modulates the activity of downstream effectors. HTR6 is coupled to G(s) G alpha proteins and mediates activation of adenylate cyclase activity. Controls pyramidal neurons migration during corticogenesis, through the regulation of CDK5 activity. Is an activator of mTOR signaling. The polypeptide is 5-hydroxytryptamine receptor 6 (Homo sapiens (Human)).